The sequence spans 921 residues: Bifunctional aspartokinase/homoserine dehydrogenase, chloroplastic (921 aa).

A chloroplast-targeting transit peptide spans 1-87 (SLSSAISPSS…DDSVEKVHLP (87 aa)). Positions 88-339 (RGAMWSIHKF…VSEAVVLKTL (252 aa)) are aspartokinase. Residues 340-567 (SYQEAWEMSY…LSRTTIAVGI (228 aa)) form an interface region. ACT domains follow at residues 417–489 (VEGT…QVAN) and 498–575 (TVGQ…LIGA). The tract at residues 568–921 (VGPGLIGATL…RLASYLGAPS (354 aa)) is homoserine dehydrogenase. Position 573 (Ile573) interacts with NAD(+). Residues Ile573, Arg605, Thr654, and Lys678 each contribute to the NADP(+) site. Ile573 lines the NADPH pocket. Thr654 is a binding site for NAD(+). NADPH is bound by residues Thr654 and Lys678. Glu705, Val708, Ala710, and Leu712 together coordinate Na(+). 2 residues coordinate NADP(+): Gly763 and Glu766. Positions 766 and 777 each coordinate L-homoserine. Lys781 serves as the catalytic Proton donor. Residue Gly898 coordinates NAD(+). Gly898 is a binding site for NADP(+). Gly898 contacts NADPH.

The protein in the N-terminal section; belongs to the aspartokinase family. In the C-terminal section; belongs to the homoserine dehydrogenase family. The cofactor is a metal cation.

The protein localises to the plastid. Its subcellular location is the chloroplast. The enzyme catalyses L-homoserine + NADP(+) = L-aspartate 4-semialdehyde + NADPH + H(+). It carries out the reaction L-homoserine + NAD(+) = L-aspartate 4-semialdehyde + NADH + H(+). It catalyses the reaction L-aspartate + ATP = 4-phospho-L-aspartate + ADP. It participates in amino-acid biosynthesis; L-lysine biosynthesis via DAP pathway; (S)-tetrahydrodipicolinate from L-aspartate: step 1/4. The protein operates within amino-acid biosynthesis; L-methionine biosynthesis via de novo pathway; L-homoserine from L-aspartate: step 1/3. It functions in the pathway amino-acid biosynthesis; L-methionine biosynthesis via de novo pathway; L-homoserine from L-aspartate: step 3/3. Its pathway is amino-acid biosynthesis; L-threonine biosynthesis; L-threonine from L-aspartate: step 1/5. It participates in amino-acid biosynthesis; L-threonine biosynthesis; L-threonine from L-aspartate: step 3/5. Functionally, bifunctional aspartate kinase and homoserine dehydrogenase that catalyzes the first and the third steps toward the synthesis of lysine, methionine and threonine from aspartate. The chain is Bifunctional aspartokinase/homoserine dehydrogenase, chloroplastic from Daucus carota (Wild carrot).